We begin with the raw amino-acid sequence, 149 residues long: D-aminoacyl-tRNA deacylase (149 aa).

A Gly-cisPro motif, important for rejection of L-amino acids motif is present at residues 137–138 (GP).

This sequence belongs to the DTD family. As to quaternary structure, homodimer.

The protein localises to the cytoplasm. It catalyses the reaction glycyl-tRNA(Ala) + H2O = tRNA(Ala) + glycine + H(+). The catalysed reaction is a D-aminoacyl-tRNA + H2O = a tRNA + a D-alpha-amino acid + H(+). An aminoacyl-tRNA editing enzyme that deacylates mischarged D-aminoacyl-tRNAs. Also deacylates mischarged glycyl-tRNA(Ala), protecting cells against glycine mischarging by AlaRS. Acts via tRNA-based rather than protein-based catalysis; rejects L-amino acids rather than detecting D-amino acids in the active site. By recycling D-aminoacyl-tRNA to D-amino acids and free tRNA molecules, this enzyme counteracts the toxicity associated with the formation of D-aminoacyl-tRNA entities in vivo and helps enforce protein L-homochirality. The chain is D-aminoacyl-tRNA deacylase from Halothermothrix orenii (strain H 168 / OCM 544 / DSM 9562).